The sequence spans 860 residues: Elastin (860 aa).

An N-terminal signal peptide occupies residues 1-27 (MAGLTAVVPQPGVLLILLLNLLHPAQP). 4-hydroxyproline is present on residues Pro35 and Pro72. Pro84 carries the post-translational modification Hydroxyproline. Residue Pro105 is modified to 4-hydroxyproline. Allysine is present on residues Lys123 and Lys127. Pro217, Pro230, Pro233, and Pro253 each carry 4-hydroxyproline. An allysine mark is found at Lys299, Lys318, and Lys321. Pro346 is subject to 4-hydroxyproline. 2 positions are modified to allysine: Lys368 and Lys371. Residue Pro383 is modified to Hydroxyproline. Pro399 and Pro405 each carry 4-hydroxyproline. Pro410 and Pro415 each carry hydroxyproline. Residues Lys431, Lys435, Lys438, Lys481, and Lys484 each carry the allysine modification. Pro498 and Pro519 each carry 4-hydroxyproline. Allysine is present on residues Lys534, Lys595, Lys599, and Lys603. A 4-hydroxyproline mark is found at Pro617, Pro626, Pro644, Pro653, and Pro661. An allysine mark is found at Lys668 and Lys671. Position 702 is a 4-hydroxyproline (Pro702). Residues Lys719, Lys723, Lys783, and Lys786 each carry the allysine modification. Pro832 bears the 4-hydroxyproline mark. Residues Cys850 and Cys855 are joined by a disulfide bond.

The protein belongs to the elastin family. In terms of assembly, the polymeric elastin chains are cross-linked together into an extensible 3D network. Forms a ternary complex with BGN and MFAP2. Interacts with MFAP2 via divalent cations (calcium &gt; magnesium &gt; manganese) in a dose-dependent and saturating manner. Interacts with FBLN5 and FBN1. Forms a ternary complex with FBN1 and FBLN2 or FBLN5. Interacts with MFAP4 in a Ca (2+)-dependent manner; this interaction promotes ELN self-assembly. Interacts with EFEMP2 with moderate affinity. Post-translationally, elastin is formed through the cross-linking of its soluble precursor tropoelastin. Cross-linking is initiated through the action of lysyl oxidase on exposed lysines to form allysine. Subsequent spontaneous condensation reactions with other allysine or unmodified lysine residues result in various bi-, tri-, and tetrafunctional cross-links. The most abundant cross-links in mature elastin fibers are lysinonorleucine, allysine aldol, desmosine, and isodesmosine. In terms of processing, hydroxylation on proline residues within the sequence motif, GXPG, is most likely to be 4-hydroxy as this fits the requirement for 4-hydroxylation in vertebrates.

The protein resides in the secreted. It localises to the extracellular space. It is found in the extracellular matrix. In terms of biological role, major structural protein of tissues such as aorta and nuchal ligament, which must expand rapidly and recover completely. Molecular determinant of the late arterial morphogenesis, stabilizing arterial structure by regulating proliferation and organization of vascular smooth muscle. This Mus musculus (Mouse) protein is Elastin (Eln).